Consider the following 1017-residue polypeptide: MEPSPAKGKAQGRLLVSTSLDAKDELEERLERCMSITTSITNGLSEREANDALTAHVCKGPQQHEEVCLGLFTLLLTEPPQAQRCYRDLTLVNRDGMNVVLMKINQILMEKFLKLQDVCRTQLVWLVRELVKSGVIGADGVLMTLMKQIAGGDISSKNLWLAENVLDILVDQREWVLKSGMLVAMSLYTYLRLIVDHGTTSLLPLRQREVDFCIGLLRERFMECFIIGRDLVRLLQNVARIPEMELVWRDLLHSPQTLSPQFTGILQLLTSRTSRKFLACRLTPDMETKLLFMTSRVRFGQQKRYQDWFQRQYLSTAESQSLRCDLIRYICGVVHPSNEVLSSDILPRWAIIGWLLTTCTSNVAASNAKLALFYDWLFFNPEKDSIMNIEPAILVMHHSMKPHPAITATLLDFMCRIIPHFFPPLEGQVRQGVFNSLNFIMEKRVLAHLAPLFDNPKLDRELRSMLRERFPEFCSSPSPPTEVKMEESVPLEMDNHVLDKEDGCYDNTDATFSDDEEELNNKGKKREFRFHQLKETYIDEPSDITPFVDQLDEALKERVLQLQKGSDTETHCEVMQEIVDLILEEDFDSEQMSTLASCLAELFKSHFRGDVLPEEITEESLEESVCKPVCLIFRNLCQMQEDNSGFSVLLDLLAELYQKQPKIGYHLLYYLKASKAASGKMSLYESFAQATALGDLHTCLMMDMKACQEDDVRLLCYLTPSIYSEFPDETLRSGELLNMIVAVIDSAQLQELMCHVMMGNLVMFRKDSVLNILIQSLDWETFEQYSTWQLFLAHSIPLETIIPILQHLKYKEHPEALSCLLLQLRREKPSEEMVKMVLSRPYHQEDQFTTSILRHWTAKHDDLLGEHIKALLIKNNNMPRKRQSLRSSSSKLAQLTLEQMLEHLDSLRLSLSNTKNNFFSQTPILQALQHVQASCDEAHKMRFSDLFSLAEEYEDSSKPPKSRRKAPASSPRSRKGAAPQPCNEEESVSSSASEEEDSKPKASKRKRKGSAVGSDSD.

Residues 952–1017 (EYEDSSKPPK…KGSAVGSDSD (66 aa)) form a disordered region. A compositionally biased stretch (acidic residues) spans 983–997 (NEEESVSSSASEEED).

This sequence belongs to the Integrator subunit 3 family. In terms of assembly, component of the Integrator complex, composed of core subunits INTS1, INTS2, INTS3, INTS4, INTS5, INTS6, INTS7, INTS8, INTS9/RC74, INTS10, INTS11/CPSF3L, INTS12, INTS13, INTS14 and INTS15. The core complex associates with protein phosphatase 2A subunits PPP2CA and PPP2R1A, to form the Integrator-PP2A (INTAC) complex. Component of the SOSS complex.

It localises to the nucleus. The protein localises to the cytoplasm. In terms of biological role, component of the integrator complex, a multiprotein complex that terminates RNA polymerase II (Pol II) transcription in the promoter-proximal region of genes. The integrator complex provides a quality checkpoint during transcription elongation by driving premature transcription termination of transcripts that are unfavorably configured for transcriptional elongation: the complex terminates transcription by (1) catalyzing dephosphorylation of the C-terminal domain (CTD) of Pol II subunit POLR2A/RPB1 and SUPT5H/SPT5, (2) degrading the exiting nascent RNA transcript via endonuclease activity and (3) promoting the release of Pol II from bound DNA. The integrator complex is also involved in terminating the synthesis of non-coding Pol II transcripts, such as enhancer RNAs (eRNAs), small nuclear RNAs (snRNAs), telomerase RNAs and long non-coding RNAs (lncRNAs). Within the integrator complex, INTS3 is involved in the post-termination step: INTS3 binds INTS7 in the open conformation of integrator complex and prevents the rebinding of Pol II to the integrator after termination cycle. Its function is as follows. Component of the SOSS complex, a multiprotein complex that functions downstream of the MRN complex to promote DNA repair and G2/M checkpoint. The SOSS complex associates with single-stranded DNA at DNA lesions and influences diverse endpoints in the cellular DNA damage response including cell-cycle checkpoint activation, recombinational repair and maintenance of genomic stability. The SOSS complex is required for efficient homologous recombination-dependent repair of double-strand breaks (DSBs) and ATM-dependent signaling pathways. In the SOSS complex, it is required for the assembly of the complex and for stabilization of the complex at DNA damage sites. The sequence is that of Integrator complex subunit 3 (ints3) from Danio rerio (Zebrafish).